A 156-amino-acid polypeptide reads, in one-letter code: ATP synthase subunit b', organellar chromatophore (156 aa).

The chain crosses the membrane as a helical span at residues 23 to 43; sequence TLPLMAIQVVFLTFILNAIFF.

It belongs to the ATPase B chain family. F-type ATPases have 2 components, F(1) - the catalytic core - and F(0) - the membrane proton channel. F(1) has five subunits: alpha(3), beta(3), gamma(1), delta(1), epsilon(1). F(0) has four main subunits: a(1), b(1), b'(1) and c(10-14). The alpha and beta chains form an alternating ring which encloses part of the gamma chain. F(1) is attached to F(0) by a central stalk formed by the gamma and epsilon chains, while a peripheral stalk is formed by the delta, b and b' chains.

It is found in the plastid. Its subcellular location is the organellar chromatophore thylakoid membrane. In terms of biological role, f(1)F(0) ATP synthase produces ATP from ADP in the presence of a proton or sodium gradient. F-type ATPases consist of two structural domains, F(1) containing the extramembraneous catalytic core and F(0) containing the membrane proton channel, linked together by a central stalk and a peripheral stalk. During catalysis, ATP synthesis in the catalytic domain of F(1) is coupled via a rotary mechanism of the central stalk subunits to proton translocation. Component of the F(0) channel, it forms part of the peripheral stalk, linking F(1) to F(0). The b'-subunit is a diverged and duplicated form of b found in plants and photosynthetic bacteria. This chain is ATP synthase subunit b', organellar chromatophore, found in Paulinella chromatophora.